Reading from the N-terminus, the 120-residue chain is Chaperonin GroEL (120 aa).

23-27 lines the ATP pocket; that stretch reads DGTTT.

This sequence belongs to the chaperonin (HSP60) family. As to quaternary structure, forms a cylinder of 14 subunits composed of two heptameric rings stacked back-to-back. Interacts with the co-chaperonin GroES.

The protein resides in the cytoplasm. The catalysed reaction is ATP + H2O + a folded polypeptide = ADP + phosphate + an unfolded polypeptide.. Together with its co-chaperonin GroES, plays an essential role in assisting protein folding. The GroEL-GroES system forms a nano-cage that allows encapsulation of the non-native substrate proteins and provides a physical environment optimized to promote and accelerate protein folding. In Mycobacterium gordonae, this protein is Chaperonin GroEL.